Consider the following 112-residue polypeptide: Tyrosine-protein phosphatase 7 (112 aa).

One can recognise a Tyrosine-protein phosphatase domain in the interval 1–112; that stretch reads NNVTIIVMIT…SSPESGPIVV (112 aa). A substrate-binding site is contributed by aspartate 82.

Belongs to the protein-tyrosine phosphatase family.

It catalyses the reaction O-phospho-L-tyrosyl-[protein] + H2O = L-tyrosyl-[protein] + phosphate. The sequence is that of Tyrosine-protein phosphatase 7 (STY-7) from Styela plicata (Wrinkled sea squirt).